The chain runs to 292 residues: AKT-interacting protein (292 aa).

A compositionally biased stretch (polar residues) spans 1–11 (MNPLWSMSSGS). The tract at residues 1-64 (MNPLWSMSSG…SPAPAAQSTN (64 aa)) is disordered. A compositionally biased stretch (basic and acidic residues) spans 14-23 (KRAEGEEKTL). A Phosphoserine modification is found at S30. The UBC core domain occupies 74 to 222 (YLEYSLLAEF…VVDSVKVCTA (149 aa)).

This sequence belongs to the ubiquitin-conjugating enzyme family. FTS subfamily. As to quaternary structure, component of the FTS/Hook/FHIP complex (FHF complex), composed of AKTIP/FTS, FHIP1B, and one or more members of the Hook family of proteins HOOK1, HOOK2, and HOOK3. Interacts directly with HOOK1, HOOK2 and HOOK3. The FHF complex associates with the homotypic vesicular sorting complex (the HOPS complex). Also interacts with AKT1. May interact with FHIP1A.

The protein resides in the cytoplasm. The protein localises to the cell membrane. Component of the FTS/Hook/FHIP complex (FHF complex). The FHF complex may function to promote vesicle trafficking and/or fusion via the homotypic vesicular protein sorting complex (the HOPS complex). Regulates apoptosis by enhancing phosphorylation and activation of AKT1. Increases release of TNFSF6 via the AKT1/GSK3B/NFATC1 signaling cascade. FHF complex promotes the distribution of AP-4 complex to the perinuclear area of the cell. This is AKT-interacting protein (Aktip) from Rattus norvegicus (Rat).